The sequence spans 348 residues: D-alanine--D-alanine ligase (348 aa).

The region spanning 132 to 334 (KRILEVAGVP…YSDIIKELVV (203 aa)) is the ATP-grasp domain. 162 to 217 (LEKLTFPVFVKPANMGSSVGISKAENESELRSAIDLALKYDSRILIEQGVVAREIE) provides a ligand contact to ATP. Mg(2+) contacts are provided by Asp288, Glu301, and Asn303.

The protein belongs to the D-alanine--D-alanine ligase family. Mg(2+) is required as a cofactor. Mn(2+) serves as cofactor.

The protein localises to the cytoplasm. The catalysed reaction is 2 D-alanine + ATP = D-alanyl-D-alanine + ADP + phosphate + H(+). Its pathway is cell wall biogenesis; peptidoglycan biosynthesis. Cell wall formation. This chain is D-alanine--D-alanine ligase, found in Streptococcus thermophilus (strain CNRZ 1066).